The primary structure comprises 793 residues: DNA mismatch repair protein MutS (793 aa).

589–596 (GPNMSGKS) contributes to the ATP binding site.

It belongs to the DNA mismatch repair MutS family.

Functionally, this protein is involved in the repair of mismatches in DNA. It is possible that it carries out the mismatch recognition step. This protein has a weak ATPase activity. This chain is DNA mismatch repair protein MutS, found in Thermotoga sp. (strain RQ2).